Reading from the N-terminus, the 264-residue chain is 3-methyl-2-oxobutanoate hydroxymethyltransferase (264 aa).

2 residues coordinate Mg(2+): Asp45 and Asp84. 3-methyl-2-oxobutanoate-binding positions include 45–46, Asp84, and Lys112; that span reads DS. Glu114 provides a ligand contact to Mg(2+). The active-site Proton acceptor is the Glu181.

The protein belongs to the PanB family. Homodecamer; pentamer of dimers. Mg(2+) is required as a cofactor.

The protein resides in the cytoplasm. The catalysed reaction is 3-methyl-2-oxobutanoate + (6R)-5,10-methylene-5,6,7,8-tetrahydrofolate + H2O = 2-dehydropantoate + (6S)-5,6,7,8-tetrahydrofolate. It functions in the pathway cofactor biosynthesis; (R)-pantothenate biosynthesis; (R)-pantoate from 3-methyl-2-oxobutanoate: step 1/2. In terms of biological role, catalyzes the reversible reaction in which hydroxymethyl group from 5,10-methylenetetrahydrofolate is transferred onto alpha-ketoisovalerate to form ketopantoate. The polypeptide is 3-methyl-2-oxobutanoate hydroxymethyltransferase (Shewanella sp. (strain MR-4)).